We begin with the raw amino-acid sequence, 284 residues long: Polyamine aminopropyltransferase (284 aa).

A PABS domain is found at 4 to 238 (EVWNTERLHD…GPMALGWGSH (235 aa)). Position 33 (Gln33) interacts with S-methyl-5'-thioadenosine. Spermidine-binding residues include His64 and Asp88. S-methyl-5'-thioadenosine is bound by residues Glu108 and 140-141 (DG). The active-site Proton acceptor is the Asp158. 158-161 (DSTD) contributes to the spermidine binding site. Pro165 lines the S-methyl-5'-thioadenosine pocket.

This sequence belongs to the spermidine/spermine synthase family. As to quaternary structure, homodimer or homotetramer.

Its subcellular location is the cytoplasm. The catalysed reaction is S-adenosyl 3-(methylsulfanyl)propylamine + putrescine = S-methyl-5'-thioadenosine + spermidine + H(+). It functions in the pathway amine and polyamine biosynthesis; spermidine biosynthesis; spermidine from putrescine: step 1/1. In terms of biological role, catalyzes the irreversible transfer of a propylamine group from the amino donor S-adenosylmethioninamine (decarboxy-AdoMet) to putrescine (1,4-diaminobutane) to yield spermidine. The protein is Polyamine aminopropyltransferase of Ruegeria sp. (strain TM1040) (Silicibacter sp.).